A 247-amino-acid chain; its full sequence is Probable transcriptional regulatory protein GM21_0933 (247 aa).

The protein belongs to the TACO1 family.

The protein resides in the cytoplasm. The polypeptide is Probable transcriptional regulatory protein GM21_0933 (Geobacter sp. (strain M21)).